We begin with the raw amino-acid sequence, 364 residues long: Palmitoyltransferase ZDHHC9 (364 aa).

Residues methionine 1–lysine 35 lie on the Cytoplasmic side of the membrane. A helical transmembrane segment spans residues glycine 36 to glutamate 56. At cysteine 57–glutamine 63 the chain is on the lumenal side. The helical transmembrane segment at glutamine 64–leucine 84 threads the bilayer. The Cytoplasmic segment spans residues arginine 85–tyrosine 183. A DHHC domain is found at lysine 139–leucine 189. Catalysis depends on cysteine 169, which acts as the S-palmitoyl cysteine intermediate. Residues phenylalanine 184 to valine 204 traverse the membrane as a helical segment. Topologically, residues tyrosine 205–glutamate 228 are lumenal. Residues valine 229–leucine 249 traverse the membrane as a helical segment. The Cytoplasmic portion of the chain corresponds to valine 250 to lysine 364. The interval proline 303–lysine 364 is disordered. The segment covering arginine 310 to proline 323 has biased composition (polar residues). Residues glutamate 346 to proline 356 are compositionally biased toward pro residues.

The protein belongs to the DHHC palmitoyltransferase family. ERF2/ZDHHC9 subfamily. As to quaternary structure, interacts with GOLGA7.

The protein localises to the endoplasmic reticulum membrane. Its subcellular location is the golgi apparatus membrane. It carries out the reaction L-cysteinyl-[protein] + hexadecanoyl-CoA = S-hexadecanoyl-L-cysteinyl-[protein] + CoA. In terms of biological role, palmitoyltransferase that catalyzes the addition of palmitate onto various protein substrates, such as ADRB2, GSDMD, HRAS, NRAS and CGAS. The ZDHHC9-GOLGA7 complex is a palmitoyltransferase specific for HRAS and NRAS. May have a palmitoyltransferase activity toward the beta-2 adrenergic receptor/ADRB2 and therefore regulate G protein-coupled receptor signaling. Acts as a regulator of innate immunity by catalyzing palmitoylation of CGAS, thereby promoting CGAS homodimerization and cyclic GMP-AMP synthase activity. Activates pyroptosis by catalyzing palmitoylation of gasdermin-D (GSDMD), thereby promoting membrane translocation and pore formation of GSDMD. The sequence is that of Palmitoyltransferase ZDHHC9 (ZDHHC9) from Pongo abelii (Sumatran orangutan).